Consider the following 302-residue polypeptide: Proline dehydrogenase 1 (302 aa).

Lys-95 lines the substrate pocket. Asp-129 is a catalytic residue. FAD contacts are provided by Met-130 and Gln-158. Arg-179 is a catalytic residue. Residues 182-184 and 221-222 contribute to the FAD site; these read KGA and TH. 283 to 284 serves as a coordination point for substrate; the sequence is RR.

The protein belongs to the proline dehydrogenase family. It depends on FAD as a cofactor.

The enzyme catalyses L-proline + a quinone = (S)-1-pyrroline-5-carboxylate + a quinol + H(+). The protein operates within amino-acid degradation; L-proline degradation into L-glutamate; L-glutamate from L-proline: step 1/2. Functionally, converts proline to delta-1-pyrroline-5-carboxylate. This chain is Proline dehydrogenase 1 (fadM), found in Bacillus subtilis (strain 168).